Consider the following 415-residue polypeptide: G2/mitotic-specific cyclin cig1 (415 aa).

Disordered regions lie at residues 54-74 (PTLI…DTFE) and 86-118 (EERS…ILTH). A compositionally biased stretch (low complexity) spans 57-71 (IEGNNESSISSSTGD). Serine 96 is modified (phosphoserine).

This sequence belongs to the cyclin family. Cyclin G subfamily.

In terms of biological role, required for efficient passage of the G1/S transition. This chain is G2/mitotic-specific cyclin cig1 (cig1), found in Schizosaccharomyces pombe (strain 972 / ATCC 24843) (Fission yeast).